The primary structure comprises 230 residues: UPF0688 protein C1orf174 homolog (230 aa).

2 disordered regions span residues 1 to 85 (MRSR…SLPK) and 97 to 166 (AEDS…VRAS). Residues 11 to 30 (RSSARLRARSYSSASLASAR) show a composition bias toward low complexity. A compositionally biased stretch (polar residues) spans 31 to 48 (DVTSSTSAKTTCLASSSH). Residues 49-78 (KATDRRTSKKFKYDKGHLVKAELQKLDPKS) show a composition bias toward basic and acidic residues. Serine 180 bears the Phosphoserine mark.

This sequence belongs to the UPF0688 family.

The protein resides in the nucleus. The polypeptide is UPF0688 protein C1orf174 homolog (Mus musculus (Mouse)).